The following is a 380-amino-acid chain: Septin homolog spn6 (380 aa).

Residues Lys-27–Asn-297 enclose the Septin-type G domain. The G1 motif stretch occupies residues Gly-37 to Thr-44. GTP is bound by residues Gly-37–Thr-44, Thr-72, Gly-98, Lys-177–Glu-185, and Arg-246. The G3 motif stretch occupies residues Asp-95 to Gly-98. The segment at Ala-176 to Asp-179 is G4 motif. Residues Lys-304–Lys-380 adopt a coiled-coil conformation.

The protein belongs to the TRAFAC class TrmE-Era-EngA-EngB-Septin-like GTPase superfamily. Septin GTPase family. Component of the sporulation-specific septin complex composed of at least spn2, spn5, spn6 and spn7.

The protein resides in the cytoplasm. It is found in the forespore membrane. Functionally, septin-like protein involved in the correct orientation of forespore membrane extension during sporulation. The chain is Septin homolog spn6 (spn6) from Schizosaccharomyces pombe (strain 972 / ATCC 24843) (Fission yeast).